We begin with the raw amino-acid sequence, 334 residues long: Glyceraldehyde-3-phosphate dehydrogenase (334 aa).

Residues 10–11, Asp-33, Lys-77, and Thr-119 contribute to the NAD(+) site; that span reads RI. D-glyceraldehyde 3-phosphate-binding positions include 149 to 151, Thr-180, 209 to 210, and Arg-232; these read SCT and TG. The active-site Nucleophile is Cys-150. Asn-314 lines the NAD(+) pocket.

Belongs to the glyceraldehyde-3-phosphate dehydrogenase family. As to quaternary structure, homotetramer.

It is found in the cytoplasm. It carries out the reaction D-glyceraldehyde 3-phosphate + phosphate + NAD(+) = (2R)-3-phospho-glyceroyl phosphate + NADH + H(+). The protein operates within carbohydrate degradation; glycolysis; pyruvate from D-glyceraldehyde 3-phosphate: step 1/5. Catalyzes the oxidative phosphorylation of glyceraldehyde 3-phosphate (G3P) to 1,3-bisphosphoglycerate (BPG) using the cofactor NAD. The first reaction step involves the formation of a hemiacetal intermediate between G3P and a cysteine residue, and this hemiacetal intermediate is then oxidized to a thioester, with concomitant reduction of NAD to NADH. The reduced NADH is then exchanged with the second NAD, and the thioester is attacked by a nucleophilic inorganic phosphate to produce BPG. This is Glyceraldehyde-3-phosphate dehydrogenase (gap) from Chlamydia trachomatis serovar D (strain ATCC VR-885 / DSM 19411 / UW-3/Cx).